We begin with the raw amino-acid sequence, 285 residues long: Secreted alkaline triacylglycerol lipase (285 aa).

Residues 1 to 20 (MLFNYQSLLVGVSLISQALS) form the signal peptide. Ser159 acts as the Nucleophile in catalysis. Catalysis depends on charge relay system residues Asp215 and His268.

The protein belongs to the AB hydrolase superfamily. FaeA family.

The protein localises to the secreted. It catalyses the reaction a triacylglycerol + H2O = a diacylglycerol + a fatty acid + H(+). In terms of biological role, secreted alkaline lipase that hydrolyzes acylglycerol lipids such as triacylglycerols and consequently releases free fatty acid. Is able to hydrolyze tributyrin (1,2,3-tributyryl-glycerin). This chain is Secreted alkaline triacylglycerol lipase, found in Penicillium cyclopium.